The sequence spans 99 residues: Aspartyl/glutamyl-tRNA(Asn/Gln) amidotransferase subunit C (99 aa).

It belongs to the GatC family. Heterotrimer of A, B and C subunits.

The enzyme catalyses L-glutamyl-tRNA(Gln) + L-glutamine + ATP + H2O = L-glutaminyl-tRNA(Gln) + L-glutamate + ADP + phosphate + H(+). It carries out the reaction L-aspartyl-tRNA(Asn) + L-glutamine + ATP + H2O = L-asparaginyl-tRNA(Asn) + L-glutamate + ADP + phosphate + 2 H(+). In terms of biological role, allows the formation of correctly charged Asn-tRNA(Asn) or Gln-tRNA(Gln) through the transamidation of misacylated Asp-tRNA(Asn) or Glu-tRNA(Gln) in organisms which lack either or both of asparaginyl-tRNA or glutaminyl-tRNA synthetases. The reaction takes place in the presence of glutamine and ATP through an activated phospho-Asp-tRNA(Asn) or phospho-Glu-tRNA(Gln). This chain is Aspartyl/glutamyl-tRNA(Asn/Gln) amidotransferase subunit C, found in Paraburkholderia xenovorans (strain LB400).